Here is a 591-residue protein sequence, read N- to C-terminus: V-type ATP synthase alpha chain (591 aa).

242-249 (GPFGAGKT) serves as a coordination point for ATP.

This sequence belongs to the ATPase alpha/beta chains family.

The catalysed reaction is ATP + H2O + 4 H(+)(in) = ADP + phosphate + 5 H(+)(out). Its function is as follows. Produces ATP from ADP in the presence of a proton gradient across the membrane. The V-type alpha chain is a catalytic subunit. The chain is V-type ATP synthase alpha chain (atpA) from Chlamydia muridarum (strain MoPn / Nigg).